Reading from the N-terminus, the 217-residue chain is Probable GTP-binding protein EngB (217 aa).

The 185-residue stretch at 33–217 (GPTEIAFAGR…RAAIELAVAR (185 aa)) folds into the EngB-type G domain. Residues 41–48 (GRSNVGKS), 68–72 (GRTQE), 95–98 (DMPG), 162–165 (TKTD), and 196–198 (TSS) each bind GTP. Mg(2+)-binding residues include serine 48 and threonine 70.

The protein belongs to the TRAFAC class TrmE-Era-EngA-EngB-Septin-like GTPase superfamily. EngB GTPase family. It depends on Mg(2+) as a cofactor.

Functionally, necessary for normal cell division and for the maintenance of normal septation. In Sinorhizobium medicae (strain WSM419) (Ensifer medicae), this protein is Probable GTP-binding protein EngB.